A 153-amino-acid polypeptide reads, in one-letter code: Interleukin-2 (153 aa).

The signal sequence occupies residues 1–20 (MYKVQLLSCIALTLALLTSS). Residue threonine 23 is glycosylated (O-linked (GalNAc...) threonine). Cysteine 78 and cysteine 125 are joined by a disulfide. A glycan (N-linked (GlcNAc...) asparagine) is linked at asparagine 111.

This sequence belongs to the IL-2 family.

It is found in the secreted. Functionally, cytokine produced by activated CD4-positive helper T-cells and to a lesser extend activated CD8-positive T-cells and natural killer (NK) cells that plays pivotal roles in the immune response and tolerance. Binds to a receptor complex composed of either the high-affinity trimeric IL-2R (IL2RA/CD25, IL2RB/CD122 and IL2RG/CD132) or the low-affinity dimeric IL-2R (IL2RB and IL2RG). Interaction with the receptor leads to oligomerization and conformation changes in the IL-2R subunits resulting in downstream signaling starting with phosphorylation of JAK1 and JAK3. In turn, JAK1 and JAK3 phosphorylate the receptor to form a docking site leading to the phosphorylation of several substrates including STAT5. This process leads to activation of several pathways including STAT, phosphoinositide-3-kinase/PI3K and mitogen-activated protein kinase/MAPK pathways. Functions as a T-cell growth factor and can increase NK-cell cytolytic activity as well. Promotes strong proliferation of activated B-cells and subsequently immunoglobulin production. Plays a pivotal role in regulating the adaptive immune system by controlling the survival and proliferation of regulatory T-cells, which are required for the maintenance of immune tolerance. Moreover, participates in the differentiation and homeostasis of effector T-cell subsets, including Th1, Th2, Th17 as well as memory CD8-positive T-cells. This is Interleukin-2 (IL2) from Oryctolagus cuniculus (Rabbit).